The chain runs to 424 residues: 23S rRNA (uracil(1939)-C(5))-methyltransferase RlmD (424 aa).

Positions 1–56 (MEKFPAVTVFDLDYQGRGVAKIDGQVVFIEGALPDETVTFCKTSAKKQFIEAVVDE) constitute a TRAM domain. Residues Cys69, Cys75, Cys78, and Cys155 each contribute to the [4Fe-4S] cluster site. S-adenosyl-L-methionine-binding residues include Gln255, Phe284, Asn289, Glu305, Asp333, and Asp354. Cys380 functions as the Nucleophile in the catalytic mechanism.

It belongs to the class I-like SAM-binding methyltransferase superfamily. RNA M5U methyltransferase family. RlmD subfamily.

It catalyses the reaction uridine(1939) in 23S rRNA + S-adenosyl-L-methionine = 5-methyluridine(1939) in 23S rRNA + S-adenosyl-L-homocysteine + H(+). Catalyzes the formation of 5-methyl-uridine at position 1939 (m5U1939) in 23S rRNA. The sequence is that of 23S rRNA (uracil(1939)-C(5))-methyltransferase RlmD from Dichelobacter nodosus (strain VCS1703A).